The sequence spans 181 residues: Oligoribonuclease (181 aa).

Residues 8–171 (LIWIDLEMTG…DDIRESIAEL (164 aa)) enclose the Exonuclease domain. Residue Y129 is part of the active site.

This sequence belongs to the oligoribonuclease family.

The protein localises to the cytoplasm. Its function is as follows. 3'-to-5' exoribonuclease specific for small oligoribonucleotides. In Alcanivorax borkumensis (strain ATCC 700651 / DSM 11573 / NCIMB 13689 / SK2), this protein is Oligoribonuclease.